A 206-amino-acid polypeptide reads, in one-letter code: Threonine efflux protein (206 aa).

The helical transmembrane segment at 1-21 (MLMLFFTVAMVHIVALMSPGP) threads the bilayer. At 22–43 (DFFFVSQTAVSRSRKEAMMGVL) the chain is on the periplasmic side. A helical transmembrane segment spans residues 44-64 (GITCGVMVWAGVALLGLHLII). Residues 65–66 (EK) are Cytoplasmic-facing. A helical membrane pass occupies residues 67-87 (MAWLHTIIMVGGGLYLCWMGY). Topologically, residues 88–149 (QMLRGALKKQ…VGDNVGAAAR (62 aa)) are periplasmic. A helical membrane pass occupies residues 150 to 173 (WGIFALITLETLAWFTVVASLFAL). Residues 174–206 (PKMRRGYQRLAKWIDGFAGALFAGFGIHLIISR) lie on the Cytoplasmic side of the membrane.

This sequence belongs to the Rht family.

The protein resides in the cell inner membrane. Conducts the efflux of threonine. This Salmonella typhi protein is Threonine efflux protein (rhtC).